Consider the following 696-residue polypeptide: Methionine--tRNA ligase (696 aa).

The 'HIGH' region signature appears at 12–22 (PYANGPLHLGH). 4 residues coordinate Zn(2+): Cys143, Cys146, Cys156, and Cys159. The short motif at 330–334 (KMSKS) is the 'KMSKS' region element. Lys333 serves as a coordination point for ATP. The tRNA-binding domain occupies 593-696 (DFAKLDLRIG…AGAQPGMPVR (104 aa)).

Belongs to the class-I aminoacyl-tRNA synthetase family. MetG type 1 subfamily. In terms of assembly, homodimer. Zn(2+) is required as a cofactor.

Its subcellular location is the cytoplasm. The catalysed reaction is tRNA(Met) + L-methionine + ATP = L-methionyl-tRNA(Met) + AMP + diphosphate. Its function is as follows. Is required not only for elongation of protein synthesis but also for the initiation of all mRNA translation through initiator tRNA(fMet) aminoacylation. The protein is Methionine--tRNA ligase of Xanthomonas campestris pv. campestris (strain 8004).